Consider the following 110-residue polypeptide: Phosphoribosyl-ATP pyrophosphatase (110 aa).

Belongs to the PRA-PH family.

Its subcellular location is the cytoplasm. The enzyme catalyses 1-(5-phospho-beta-D-ribosyl)-ATP + H2O = 1-(5-phospho-beta-D-ribosyl)-5'-AMP + diphosphate + H(+). The protein operates within amino-acid biosynthesis; L-histidine biosynthesis; L-histidine from 5-phospho-alpha-D-ribose 1-diphosphate: step 2/9. The sequence is that of Phosphoribosyl-ATP pyrophosphatase from Pseudomonas savastanoi pv. phaseolicola (strain 1448A / Race 6) (Pseudomonas syringae pv. phaseolicola (strain 1448A / Race 6)).